The sequence spans 1432 residues: uncharacterized protein (1432 aa).

Disordered regions lie at residues 1–72, 208–237, 280–335, 531–607, 690–712, 738–801, 896–950, 1044–1076, and 1303–1359; these read MDTI…NYYN, NKIE…NNGQ, ERNE…ENNL, IVKS…NNSS, QNKS…TTTT, NNTL…NGGR, QSNN…SPPT, NINS…NNNN, and NNNN…NTTP. Low complexity-rich tracts occupy residues 14–72, 208–225, and 284–300; these read INNN…NYYN, NKIE…NNEN, and LTSP…LPSS. Over residues 315–325 the composition is skewed to acidic residues; sequence QEEEEEEEEED. 5 stretches are compositionally biased toward low complexity: residues 536–575, 583–607, 691–712, 744–779, and 896–944; these read SSSN…NKNK, DNNT…NNSS, NKSP…TTTT, NMNN…NSNN, and QSNN…SSSN. Positions 1311-1320 are enriched in gly residues; the sequence is NGNGNGGING. Over residues 1321–1333 the composition is skewed to low complexity; sequence NNGNNSGSNNKEN. Positions 1334 to 1346 are enriched in gly residues; the sequence is GGTGAGIGGGGGL. Low complexity predominate over residues 1347-1359; that stretch reads QLPNNNNNNNTTP.

This is an uncharacterized protein from Dictyostelium discoideum (Social amoeba).